The primary structure comprises 292 residues: Peroxisomal 2,4-dienoyl-CoA reductase [(3E)-enoyl-CoA-producing] (292 aa).

Alanine 2 carries the post-translational modification N-acetylalanine. NADP(+) is bound by residues 35-40, 60-64, and aspartate 86; these read GGGSGI and RSLQK. Arginine 60 provides a ligand contact to substrate. Position 64 is an N6-acetyllysine (lysine 64). Residues arginine 88, phenylalanine 118, and 126 to 128 each bind substrate; that span reads SFN. Position 151 is an N6-acetyllysine (lysine 151). NADP(+) is bound by residues lysine 182 and 208 to 214; that span reads PGAISGT. Position 219 (arginine 219) interacts with substrate. A Phosphoserine modification is found at serine 287. Positions 290–292 match the Microbody targeting signal motif; sequence AKL. Lysine 291 is subject to N6-acetyllysine.

The protein belongs to the short-chain dehydrogenases/reductases (SDR) family. 2,4-dienoyl-CoA reductase subfamily. In terms of assembly, monomer, dimer and oligomer.

The protein resides in the peroxisome. It carries out the reaction a (2E,4Z)-dienoyl-CoA + NADPH + H(+) = a 4,5-saturated-(3E)-enoyl-CoA + NADP(+). The enzyme catalyses a (2E,4E)-dienoyl-CoA + NADPH + H(+) = a 4,5-saturated-(3E)-enoyl-CoA + NADP(+). The catalysed reaction is (2E,4E)-hexadienoyl-CoA + NADPH + H(+) = (3E)-hexenoyl-CoA + NADP(+). It catalyses the reaction (2E,4E)-decadienoyl-CoA + NADPH + H(+) = (3E)-decenoyl-CoA + NADP(+). It carries out the reaction (2E,4Z,7Z,10Z,13Z,16Z,19Z)-docosaheptaenoyl-CoA + NADPH + H(+) = (3E,7Z,10Z,13Z,16Z,19Z)-docosahexaenoyl-CoA + NADP(+). In terms of biological role, auxiliary enzyme of beta-oxidation. Participates in the degradation of unsaturated fatty enoyl-CoA esters having double bonds in both even- and odd-numbered positions in peroxisome. Catalyzes the NADP-dependent reduction of 2,4-dienoyl-CoA to yield trans-3-enoyl-CoA. Has activity towards short and medium chain 2,4-dienoyl-CoAs, but also towards 2,4,7,10,13,16,19-docosaheptaenoyl-CoA, suggesting that it does not constitute a rate limiting step in the peroxisomal degradation of docosahexaenoic acid. The chain is Peroxisomal 2,4-dienoyl-CoA reductase [(3E)-enoyl-CoA-producing] (Decr2) from Mus musculus (Mouse).